Consider the following 325-residue polypeptide: Structure-specific endonuclease subunit SLX1 (325 aa).

One can recognise a GIY-YIG domain in the interval 10 to 92 (ALYTVYILRS…NNPHLSMHIP (83 aa)). The SLX1-type zinc-finger motif lies at 230–284 (CVVCREEMKSGEGLHAVCTHEGCDGVGHISCWSRSFLKNNDTGSILPVQGQCPMC).

This sequence belongs to the SLX1 family. As to quaternary structure, forms a heterodimer with SLX4. It depends on a divalent metal cation as a cofactor.

Its subcellular location is the nucleus. Catalytic subunit of the SLX1-SLX4 structure-specific endonuclease that resolves DNA secondary structures generated during DNA repair and recombination. Has endonuclease activity towards branched DNA substrates, introducing single-strand cuts in duplex DNA close to junctions with ss-DNA. The polypeptide is Structure-specific endonuclease subunit SLX1 (Chaetomium globosum (strain ATCC 6205 / CBS 148.51 / DSM 1962 / NBRC 6347 / NRRL 1970) (Soil fungus)).